A 219-amino-acid polypeptide reads, in one-letter code: Ribonuclease HII (219 aa).

The region spanning Arg-30–Ser-219 is the RNase H type-2 domain. Positions 36, 37, and 128 each coordinate a divalent metal cation.

This sequence belongs to the RNase HII family. Mn(2+) serves as cofactor. The cofactor is Mg(2+).

It localises to the cytoplasm. It carries out the reaction Endonucleolytic cleavage to 5'-phosphomonoester.. Its function is as follows. Endonuclease that specifically degrades the RNA of RNA-DNA hybrids. This is Ribonuclease HII from Pelobacter propionicus (strain DSM 2379 / NBRC 103807 / OttBd1).